The following is a 261-amino-acid chain: Cytochrome c oxidase subunit 3 (261 aa).

Residues 1 to 15 (MTHQTHAYHMVDPSP) are Mitochondrial matrix-facing. A helical transmembrane segment spans residues 16–34 (WPLTGALSALLMTSGLTMW). Residues 35 to 40 (FHYHSV) lie on the Mitochondrial intermembrane side of the membrane. The chain crosses the membrane as a helical span at residues 41–66 (VLLFLGLMTNTLTMFQWWRDVVREGT). Residues 67 to 72 (FQGHHT) lie on the Mitochondrial matrix side of the membrane. The helical transmembrane segment at 73-105 (PVVQEGLRYGMILFITSEVLFFTGFFWAFYHSS) threads the bilayer. Over 106–128 (LAPTPELGSYWPPVGVYPLNPLE) the chain is Mitochondrial intermembrane. A helical transmembrane segment spans residues 129–152 (VPLLNTSVLLASGVTITWAHHSLM). At 153–155 (EGN) the chain is on the mitochondrial matrix side. The chain crosses the membrane as a helical span at residues 156-183 (RKNMLQALLITILLGVYFTLLQMFEYYE). Residues 184 to 190 (ASFTISD) lie on the Mitochondrial intermembrane side of the membrane. The chain crosses the membrane as a helical span at residues 191-223 (GIYGSTFFVTTGFHGLHVIIGSTFLLTCFIRQL). The Mitochondrial matrix segment spans residues 224-232 (KFHFTSNHH). The helical transmembrane segment at 233-256 (FGFEAAAWYWHFVDVVWLFLYLSI) threads the bilayer. Topologically, residues 257–261 (YWWGS) are mitochondrial intermembrane.

Belongs to the cytochrome c oxidase subunit 3 family. As to quaternary structure, component of the cytochrome c oxidase (complex IV, CIV), a multisubunit enzyme composed of 14 subunits. The complex is composed of a catalytic core of 3 subunits MT-CO1, MT-CO2 and MT-CO3, encoded in the mitochondrial DNA, and 11 supernumerary subunits COX4I, COX5A, COX5B, COX6A, COX6B, COX6C, COX7A, COX7B, COX7C, COX8 and NDUFA4, which are encoded in the nuclear genome. The complex exists as a monomer or a dimer and forms supercomplexes (SCs) in the inner mitochondrial membrane with NADH-ubiquinone oxidoreductase (complex I, CI) and ubiquinol-cytochrome c oxidoreductase (cytochrome b-c1 complex, complex III, CIII), resulting in different assemblies (supercomplex SCI(1)III(2)IV(1) and megacomplex MCI(2)III(2)IV(2)).

Its subcellular location is the mitochondrion inner membrane. It carries out the reaction 4 Fe(II)-[cytochrome c] + O2 + 8 H(+)(in) = 4 Fe(III)-[cytochrome c] + 2 H2O + 4 H(+)(out). In terms of biological role, component of the cytochrome c oxidase, the last enzyme in the mitochondrial electron transport chain which drives oxidative phosphorylation. The respiratory chain contains 3 multisubunit complexes succinate dehydrogenase (complex II, CII), ubiquinol-cytochrome c oxidoreductase (cytochrome b-c1 complex, complex III, CIII) and cytochrome c oxidase (complex IV, CIV), that cooperate to transfer electrons derived from NADH and succinate to molecular oxygen, creating an electrochemical gradient over the inner membrane that drives transmembrane transport and the ATP synthase. Cytochrome c oxidase is the component of the respiratory chain that catalyzes the reduction of oxygen to water. Electrons originating from reduced cytochrome c in the intermembrane space (IMS) are transferred via the dinuclear copper A center (CU(A)) of subunit 2 and heme A of subunit 1 to the active site in subunit 1, a binuclear center (BNC) formed by heme A3 and copper B (CU(B)). The BNC reduces molecular oxygen to 2 water molecules using 4 electrons from cytochrome c in the IMS and 4 protons from the mitochondrial matrix. The polypeptide is Cytochrome c oxidase subunit 3 (MT-CO3) (Mammuthus primigenius (Siberian woolly mammoth)).